The chain runs to 208 residues: Small ribosomal subunit protein uS4 (208 aa).

Residues 98–161 form the S4 RNA-binding domain; the sequence is RRLDNVVYRM…KSNPQVVRAM (64 aa).

This sequence belongs to the universal ribosomal protein uS4 family. Part of the 30S ribosomal subunit. Contacts protein S5. The interaction surface between S4 and S5 is involved in control of translational fidelity.

In terms of biological role, one of the primary rRNA binding proteins, it binds directly to 16S rRNA where it nucleates assembly of the body of the 30S subunit. With S5 and S12 plays an important role in translational accuracy. The sequence is that of Small ribosomal subunit protein uS4 from Helicobacter acinonychis (strain Sheeba).